A 117-amino-acid chain; its full sequence is uncharacterized protein (117 aa).

It belongs to the transposase 34 family.

This is an uncharacterized protein from Sinorhizobium fredii (strain NBRC 101917 / NGR234).